Reading from the N-terminus, the 60-residue chain is uncharacterized protein (60 aa).

This is an uncharacterized protein from Saccharomyces cerevisiae (strain ATCC 204508 / S288c) (Baker's yeast).